The chain runs to 469 residues: GTPase Der (469 aa).

2 EngA-type G domains span residues 3-166 (PVIA…PEDE) and 177-350 (LRLA…ESAN). GTP contacts are provided by residues 9–16 (GRPNVGKS), 56–60 (DTGGI), 118–121 (NKVD), 183–190 (GRPNVGKS), 230–234 (DTAGV), and 295–298 (NKWD). In terms of domain architecture, KH-like spans 351-435 (LKVSPAKLTQ…PVKIEFKTSE (85 aa)).

It belongs to the TRAFAC class TrmE-Era-EngA-EngB-Septin-like GTPase superfamily. EngA (Der) GTPase family. As to quaternary structure, associates with the 50S ribosomal subunit.

In terms of biological role, GTPase that plays an essential role in the late steps of ribosome biogenesis. The sequence is that of GTPase Der from Acinetobacter baumannii (strain ACICU).